The sequence spans 316 residues: Biotin synthase (316 aa).

A Radical SAM core domain is found at 38–266; it reads YKGKKIELCA…DKDIRVCGGR (229 aa). Positions 56, 60, and 63 each coordinate [4Fe-4S] cluster. 4 residues coordinate [2Fe-2S] cluster: Ser-100, Cys-131, Cys-191, and Arg-261.

It belongs to the radical SAM superfamily. Biotin synthase family. Homodimer. It depends on [4Fe-4S] cluster as a cofactor. Requires [2Fe-2S] cluster as cofactor.

It catalyses the reaction (4R,5S)-dethiobiotin + (sulfur carrier)-SH + 2 reduced [2Fe-2S]-[ferredoxin] + 2 S-adenosyl-L-methionine = (sulfur carrier)-H + biotin + 2 5'-deoxyadenosine + 2 L-methionine + 2 oxidized [2Fe-2S]-[ferredoxin]. It functions in the pathway cofactor biosynthesis; biotin biosynthesis; biotin from 7,8-diaminononanoate: step 2/2. Its function is as follows. Catalyzes the conversion of dethiobiotin (DTB) to biotin by the insertion of a sulfur atom into dethiobiotin via a radical-based mechanism. This chain is Biotin synthase, found in Thermodesulfovibrio yellowstonii (strain ATCC 51303 / DSM 11347 / YP87).